Here is a 289-residue protein sequence, read N- to C-terminus: Serine/threonine-protein phosphatase Pgam5, mitochondrial (289 aa).

This sequence belongs to the phosphoglycerate mutase family. BPG-dependent PGAM subfamily. Interacts with Pk92B/ASK1.

The protein resides in the mitochondrion outer membrane. The enzyme catalyses O-phospho-L-seryl-[protein] + H2O = L-seryl-[protein] + phosphate. The catalysed reaction is O-phospho-L-threonyl-[protein] + H2O = L-threonyl-[protein] + phosphate. Its function is as follows. Displays phosphatase activity for serine/threonine residues, and dephosphorylates and activates Pk92B kinase. Has apparently no phosphoglycerate mutase activity. This chain is Serine/threonine-protein phosphatase Pgam5, mitochondrial, found in Drosophila yakuba (Fruit fly).